The primary structure comprises 377 residues: Citrate synthase (377 aa).

Residues H220, H259, and D313 contribute to the active site.

The protein belongs to the citrate synthase family. Homodimer.

It carries out the reaction oxaloacetate + acetyl-CoA + H2O = citrate + CoA + H(+). Its pathway is carbohydrate metabolism; tricarboxylic acid cycle; isocitrate from oxaloacetate: step 1/2. Its function is as follows. Might regulate the synthesis and function of enzymes involved in later enzymatic steps of Krebs cycle. Loss in activity results in sporulation defect. The polypeptide is Citrate synthase (gltA) (Deinococcus radiodurans (strain ATCC 13939 / DSM 20539 / JCM 16871 / CCUG 27074 / LMG 4051 / NBRC 15346 / NCIMB 9279 / VKM B-1422 / R1)).